The following is a 272-amino-acid chain: MMLGLENKLKLYGFNNLTKTLSFNIYDVCYAKSEREQKDYIAYIDEQYNSERLTNILCDVTKMIGAHVLNISKQDYDPQGASVTILISEETLAVKEIDKSCNLGQIDILNTRDTIVGHLDKSHVTVHTYPEYHPDNSIATFRVDIDVSTCGEVSPLNALNYLIGSFDSDIITIDYRVRGFTRDVDGKKLFIDHKITSIQDYIDENTLKRYDAMDINVYQSNIFHTKMLIKEIELQNYLFNRDVYEIKPKQRLEIENNLRKEMIEIFSGTNIY.

The active-site Schiff-base intermediate with substrate; via pyruvic acid is S122. S122 bears the Pyruvic acid (Ser); by autocatalysis mark. The active-site Proton acceptor; for processing activity is the H127. C150 (proton donor; for catalytic activity) is an active-site residue.

The protein belongs to the prokaryotic AdoMetDC family. Type 2 subfamily. As to quaternary structure, heterooctamer of four alpha and four beta chains arranged as a tetramer of alpha/beta heterodimers. Pyruvate is required as a cofactor. Is synthesized initially as an inactive proenzyme. Formation of the active enzyme involves a self-maturation process in which the active site pyruvoyl group is generated from an internal serine residue via an autocatalytic post-translational modification. Two non-identical subunits are generated from the proenzyme in this reaction, and the pyruvate is formed at the N-terminus of the alpha chain, which is derived from the carboxyl end of the proenzyme. The post-translation cleavage follows an unusual pathway, termed non-hydrolytic serinolysis, in which the side chain hydroxyl group of the serine supplies its oxygen atom to form the C-terminus of the beta chain, while the remainder of the serine residue undergoes an oxidative deamination to produce ammonia and the pyruvoyl group blocking the N-terminus of the alpha chain.

The catalysed reaction is S-adenosyl-L-methionine + H(+) = S-adenosyl 3-(methylsulfanyl)propylamine + CO2. The protein operates within amine and polyamine biosynthesis; S-adenosylmethioninamine biosynthesis; S-adenosylmethioninamine from S-adenosyl-L-methionine: step 1/1. Functionally, catalyzes the decarboxylation of S-adenosylmethionine to S-adenosylmethioninamine (dcAdoMet), the propylamine donor required for the synthesis of the polyamines spermine and spermidine from the diamine putrescine. This Clostridium botulinum (strain Eklund 17B / Type B) protein is S-adenosylmethionine decarboxylase proenzyme.